The chain runs to 284 residues: NH(3)-dependent NAD(+) synthetase (284 aa).

ATP is bound at residue 51–58 (GISGGIDS). Residue D57 participates in Mg(2+) binding. R148 lines the deamido-NAD(+) pocket. An ATP-binding site is contributed by T168. Position 173 (E173) interacts with Mg(2+). Deamido-NAD(+)-binding residues include K181 and D188. The ATP site is built by K197 and T219. 268-269 (HK) contacts deamido-NAD(+).

Belongs to the NAD synthetase family. Homodimer.

The enzyme catalyses deamido-NAD(+) + NH4(+) + ATP = AMP + diphosphate + NAD(+) + H(+). The protein operates within cofactor biosynthesis; NAD(+) biosynthesis; NAD(+) from deamido-NAD(+) (ammonia route): step 1/1. Its function is as follows. Catalyzes the ATP-dependent amidation of deamido-NAD to form NAD. Uses ammonia as a nitrogen source. The chain is NH(3)-dependent NAD(+) synthetase from Burkholderia pseudomallei (strain 1106a).